The chain runs to 220 residues: Increased recombination centers protein 22 (220 aa).

The N-terminal stretch at 1-19 (MKLSNLLLFANVGTLLVKA) is a signal peptide. At 20–166 (TDENISPNEE…PPPMSFFNPK (147 aa)) the chain is on the lumenal side. A helical transmembrane segment spans residues 167-186 (FLSIQAVLIGVISYFTYFIF). Topologically, residues 187 to 220 (RSSKKERRGVVSKTKAPKKVKLDESWLPENHLKK) are cytoplasmic.

The protein belongs to the IRC22 family.

The protein resides in the endoplasmic reticulum membrane. Is probably involved in a pathway contributing to genomic integrity. The polypeptide is Increased recombination centers protein 22 (IRC22) (Eremothecium gossypii (strain ATCC 10895 / CBS 109.51 / FGSC 9923 / NRRL Y-1056) (Yeast)).